A 322-amino-acid polypeptide reads, in one-letter code: N-acetyl-gamma-glutamyl-phosphate reductase (322 aa).

Residue Cys117 is part of the active site.

The protein belongs to the NAGSA dehydrogenase family. Type 2 subfamily.

Its subcellular location is the cytoplasm. It catalyses the reaction N-acetyl-L-glutamate 5-semialdehyde + phosphate + NADP(+) = N-acetyl-L-glutamyl 5-phosphate + NADPH + H(+). It participates in amino-acid biosynthesis; L-arginine biosynthesis; N(2)-acetyl-L-ornithine from L-glutamate: step 3/4. Catalyzes the NADPH-dependent reduction of N-acetyl-5-glutamyl phosphate to yield N-acetyl-L-glutamate 5-semialdehyde. The polypeptide is N-acetyl-gamma-glutamyl-phosphate reductase (Trichormus variabilis (strain ATCC 29413 / PCC 7937) (Anabaena variabilis)).